The chain runs to 881 residues: Alanine--tRNA ligase (881 aa).

The Zn(2+) site is built by histidine 564, histidine 568, cysteine 673, and histidine 677. The segment at 848–867 (GQGGGGRPDMAQAGGPDGDK) is disordered.

This sequence belongs to the class-II aminoacyl-tRNA synthetase family. Requires Zn(2+) as cofactor.

It is found in the cytoplasm. It carries out the reaction tRNA(Ala) + L-alanine + ATP = L-alanyl-tRNA(Ala) + AMP + diphosphate. Catalyzes the attachment of alanine to tRNA(Ala) in a two-step reaction: alanine is first activated by ATP to form Ala-AMP and then transferred to the acceptor end of tRNA(Ala). Also edits incorrectly charged Ser-tRNA(Ala) and Gly-tRNA(Ala) via its editing domain. In Hyphomonas neptunium (strain ATCC 15444), this protein is Alanine--tRNA ligase.